We begin with the raw amino-acid sequence, 441 residues long: Ribosomal protein uS12 methylthiotransferase RimO (441 aa).

The 111-residue stretch at 8–118 (PKIGFVSLGC…VLEHVHHYVP (111 aa)) folds into the MTTase N-terminal domain. Cys-17, Cys-53, Cys-82, Cys-150, Cys-154, and Cys-157 together coordinate [4Fe-4S] cluster. The 238-residue stretch at 136–373 (LTPRHYAYLK…MQLQQQISAE (238 aa)) folds into the Radical SAM core domain. The TRAM domain maps to 376–441 (QEKVGREILV…DEYDLWGSRV (66 aa)).

This sequence belongs to the methylthiotransferase family. RimO subfamily. Requires [4Fe-4S] cluster as cofactor.

The protein resides in the cytoplasm. It carries out the reaction L-aspartate(89)-[ribosomal protein uS12]-hydrogen + (sulfur carrier)-SH + AH2 + 2 S-adenosyl-L-methionine = 3-methylsulfanyl-L-aspartate(89)-[ribosomal protein uS12]-hydrogen + (sulfur carrier)-H + 5'-deoxyadenosine + L-methionine + A + S-adenosyl-L-homocysteine + 2 H(+). In terms of biological role, catalyzes the methylthiolation of an aspartic acid residue of ribosomal protein uS12. The polypeptide is Ribosomal protein uS12 methylthiotransferase RimO (Shigella sonnei (strain Ss046)).